We begin with the raw amino-acid sequence, 161 residues long: Ferric uptake regulation protein 1 (161 aa).

Residues cysteine 94 and cysteine 97 each contribute to the Zn(2+) site.

The protein belongs to the Fur family.

Its subcellular location is the cytoplasm. Functionally, acts as a global negative controlling element, employing Fe(2+) as a cofactor to bind the operator of the repressed genes. The polypeptide is Ferric uptake regulation protein 1 (fur1) (Mycolicibacterium fortuitum (Mycobacterium fortuitum)).